Consider the following 101-residue polypeptide: Small ribosomal subunit protein uS14 (101 aa).

It belongs to the universal ribosomal protein uS14 family. In terms of assembly, part of the 30S ribosomal subunit. Contacts proteins S3 and S10.

Binds 16S rRNA, required for the assembly of 30S particles and may also be responsible for determining the conformation of the 16S rRNA at the A site. This chain is Small ribosomal subunit protein uS14, found in Rhizorhabdus wittichii (strain DSM 6014 / CCUG 31198 / JCM 15750 / NBRC 105917 / EY 4224 / RW1) (Sphingomonas wittichii).